Reading from the N-terminus, the 197-residue chain is Alkyl hydroperoxide reductase C (197 aa).

The 162-residue stretch at 2 to 163 (VLVTQNAPNF…MIRMVDALDF (162 aa)) folds into the Thioredoxin domain. Cysteine 50 acts as the Cysteine sulfenic acid (-SOH) intermediate in catalysis.

It belongs to the peroxiredoxin family. AhpC/Prx1 subfamily. In terms of assembly, homodimer; disulfide-linked, upon oxidation. 5 homodimers assemble to form a ring-like decamer.

It is found in the cytoplasm. The enzyme catalyses a hydroperoxide + NADH + H(+) = an alcohol + NAD(+) + H2O. Functionally, thiol-specific peroxidase that catalyzes the reduction of hydrogen peroxide and organic hydroperoxides to water and alcohols, respectively. Plays a role in cell protection against oxidative stress by detoxifying peroxides. In Buchnera aphidicola subsp. Acyrthosiphon pisum (strain APS) (Acyrthosiphon pisum symbiotic bacterium), this protein is Alkyl hydroperoxide reductase C.